Consider the following 248-residue polypeptide: Putative amino-acid ABC transporter-binding protein PatH (248 aa).

A signal peptide spans 1-21; the sequence is MKNWIKVAVAAIALSAATVQA.

This sequence belongs to the bacterial solute-binding protein 3 family.

It localises to the periplasm. Its function is as follows. Probably part of a binding-protein-dependent transport system for an amino acid. The polypeptide is Putative amino-acid ABC transporter-binding protein PatH (patH) (Vibrio harveyi (Beneckea harveyi)).